Consider the following 485-residue polypeptide: Taxane 13-alpha-hydroxylase (485 aa).

Cysteine 431 provides a ligand contact to heme.

It belongs to the cytochrome P450 family. Heme serves as cofactor.

It catalyses the reaction taxa-4(20),11-dien-5alpha-ol + reduced [NADPH--hemoprotein reductase] + O2 = taxa-4(20),11-dien-5alpha,13alpha-diol + oxidized [NADPH--hemoprotein reductase] + H2O + H(+). It functions in the pathway alkaloid biosynthesis; taxol biosynthesis. Functionally, involved in the transformation of a taxadienyl acetate by hydroxylation at C13 to yield taxadien-5-alpha-acetoxy-13-alpha-ol. In Taxus cuspidata (Japanese yew), this protein is Taxane 13-alpha-hydroxylase (CYP725A2).